A 246-amino-acid chain; its full sequence is MFYSPLDQFELKPLLLITDNLTFSITNYTLYLIIVSLIIIFYSSIIRHNYLGSSRWGVSVIAIYDTILNLVNGQIGRKGGYYFPLIFTIFNFILIANLISMIPYSFAISAQLVAVVSFSLTLWIGNVVLGLYLHGWGFFALFVPSGTPLALVPVLVLIEALSYASRAISLGLRLGANILSGHLLMLILGSLIISLMSSSFLGFVSGIIPILAVVAITILEFGIAIIQAYVFSILLSGYIKDSVELH.

Residues 1–3 constitute a propeptide, removed in mature form; the sequence is MFY. Helical transmembrane passes span 21–41, 56–76, 82–102, 113–133, 138–158, 184–204, and 206–226; these read LTFSITNYTLYLIIVSLIIIF, WGVSVIAIYDTILNLVNGQIG, YFPLIFTIFNFILIANLISMI, VAVVSFSLTLWIGNVVLGLYL, FFALFVPSGTPLALVPVLVLI, LMLILGSLIISLMSSSFLGFV, and GIIPILAVVAITILEFGIAII.

Belongs to the ATPase A chain family. As to quaternary structure, F-type ATPases have 2 components, CF(1) - the catalytic core - and CF(0) - the membrane proton channel. CF(1) has five subunits: alpha(3), beta(3), gamma(1), delta(1), epsilon(1). CF(0) has three main subunits: a, b and c.

Its subcellular location is the mitochondrion inner membrane. Functionally, mitochondrial membrane ATP synthase (F(1)F(0) ATP synthase or Complex V) produces ATP from ADP in the presence of a proton gradient across the membrane which is generated by electron transport complexes of the respiratory chain. F-type ATPases consist of two structural domains, F(1) - containing the extramembraneous catalytic core and F(0) - containing the membrane proton channel, linked together by a central stalk and a peripheral stalk. During catalysis, ATP synthesis in the catalytic domain of F(1) is coupled via a rotary mechanism of the central stalk subunits to proton translocation. Key component of the proton channel; it may play a direct role in the translocation of protons across the membrane. The chain is ATP synthase subunit a (ATP6) from Candida parapsilosis (Yeast).